A 311-amino-acid polypeptide reads, in one-letter code: Probable dihydroorotate dehydrogenase A (fumarate) (311 aa).

FMN-binding positions include S20 and 44 to 45 (KT). Substrate-binding positions include K44, 68-72 (NSMGL), and N127. N127 serves as a coordination point for FMN. Residue C130 is the Nucleophile of the active site. K164 and I192 together coordinate FMN. 193 to 194 (NS) serves as a coordination point for substrate. Residues G221, 249-250 (GG), and 271-272 (GT) contribute to the FMN site.

The protein belongs to the dihydroorotate dehydrogenase family. Type 1 subfamily. In terms of assembly, homodimer. FMN is required as a cofactor.

It localises to the cytoplasm. It catalyses the reaction (S)-dihydroorotate + fumarate = orotate + succinate. The protein operates within pyrimidine metabolism; UMP biosynthesis via de novo pathway. Functionally, catalyzes the conversion of dihydroorotate to orotate with fumarate as the electron acceptor. In Enterococcus faecalis (strain ATCC 700802 / V583), this protein is Probable dihydroorotate dehydrogenase A (fumarate) (pyrDA).